We begin with the raw amino-acid sequence, 113 residues long: MHELWLCKRIVEIIKQQATGNKCRMVKKIVLEIGQLVAVDKHALNFSFKVITQGTIAQNAELSIVEIPGEAICNSCQQIVPMKQYYDECLVCGNHSLTLTKGEELKVKSMVVE.

H2 is a Ni(2+) binding site. Zn(2+) contacts are provided by C73, C76, C89, and C92.

Belongs to the HypA/HybF family.

Functionally, involved in the maturation of [NiFe] hydrogenases. Required for nickel insertion into the metal center of the hydrogenase. The protein is Hydrogenase maturation factor HypA of Legionella pneumophila (strain Paris).